Consider the following 200-residue polypeptide: dTTP/UTP pyrophosphatase (200 aa).

The active-site Proton acceptor is the aspartate 76.

This sequence belongs to the Maf family. YhdE subfamily. A divalent metal cation serves as cofactor.

It is found in the cytoplasm. It catalyses the reaction dTTP + H2O = dTMP + diphosphate + H(+). The catalysed reaction is UTP + H2O = UMP + diphosphate + H(+). Nucleoside triphosphate pyrophosphatase that hydrolyzes dTTP and UTP. May have a dual role in cell division arrest and in preventing the incorporation of modified nucleotides into cellular nucleic acids. This is dTTP/UTP pyrophosphatase from Acetivibrio thermocellus (strain ATCC 27405 / DSM 1237 / JCM 9322 / NBRC 103400 / NCIMB 10682 / NRRL B-4536 / VPI 7372) (Clostridium thermocellum).